A 448-amino-acid chain; its full sequence is Glutamyl-tRNA reductase (448 aa).

Residues 49–52, S109, 114–116, and Q120 each bind substrate; these read TCNR and ETQ. The active-site Nucleophile is C50. An NADP(+)-binding site is contributed by 189-194; it reads GAGEMS.

Belongs to the glutamyl-tRNA reductase family. Homodimer.

The catalysed reaction is (S)-4-amino-5-oxopentanoate + tRNA(Glu) + NADP(+) = L-glutamyl-tRNA(Glu) + NADPH + H(+). The protein operates within porphyrin-containing compound metabolism; protoporphyrin-IX biosynthesis; 5-aminolevulinate from L-glutamyl-tRNA(Glu): step 1/2. Catalyzes the NADPH-dependent reduction of glutamyl-tRNA(Glu) to glutamate 1-semialdehyde (GSA). The sequence is that of Glutamyl-tRNA reductase from Staphylococcus aureus (strain MRSA252).